The primary structure comprises 684 residues: Hydroxyproline O-galactosyltransferase GALT2 (684 aa).

Topologically, residues M1–H22 are cytoplasmic. A helical; Signal-anchor for type II membrane protein transmembrane segment spans residues F23 to I43. Residues E44–R684 lie on the Lumenal side of the membrane. Residues K80–I102 form a disordered region. Residues N103, N127, and N162 are each glycosylated (N-linked (GlcNAc...) asparagine). The Galectin domain maps to R191–T405. N524 and N632 each carry an N-linked (GlcNAc...) asparagine glycan.

The protein belongs to the glycosyltransferase 31 family. Requires Mn(2+) as cofactor. In terms of tissue distribution, expressed in stems and at lower levels in cauline leaves and siliques.

It is found in the golgi apparatus membrane. It participates in protein modification; protein glycosylation. Functionally, possesses hydroxyproline O-galactosyltransferase activity. Transfers galactose from UDP-galactose to hydroxyproline residues in the arabinogalactan proteins (AGPs). Is specific for AGPs containing non-contiguous peptidyl hydroxyproline residues. Utilizes UDP-galactose solely as sugar donor. The addition of galactose onto the peptidyl hydroxyproline residues in AGP core proteins represents the first committed step in arabinogalactan polysaccharide addition. AGP glycans play essential roles in both vegetative and reproductive plant growth. The protein is Hydroxyproline O-galactosyltransferase GALT2 of Arabidopsis thaliana (Mouse-ear cress).